A 743-amino-acid chain; its full sequence is Homeobox-leucine zipper protein PROTODERMAL FACTOR 2 (743 aa).

The disordered stretch occupies residues 1–72 (MYHPNMFESH…KKRYHRHTQR (72 aa)). Residues 30–39 (SREDDFETKS) are compositionally biased toward basic and acidic residues. Residues 60 to 71 (PNKKKRYHRHTQ) are compositionally biased toward basic residues. The homeobox DNA-binding region spans 62-121 (KKKRYHRHTQRQIQELESFFKECPHPDDKQRKELSRDLNLEPLQVKFWFQNKRTQMKAQS). Positions 110-192 (FQNKRTQMKA…DRISAIAAKY (83 aa)) form a coiled coil. In terms of domain architecture, START spans 244 to 476 (SETDKPIIVE…LERQCERLAS (233 aa)).

This sequence belongs to the HD-ZIP homeobox family. Class IV subfamily. In terms of assembly, interacts with GAI/RGA2, RGA/RGA1/GRS, RGL2/SCL19 and ATML1. Binds to AIL7/PLT7, ANT, BBM and AIL1. As to expression, specifically expressed in the layer 1 (L1) of shoot meristems.

Its subcellular location is the nucleus. In terms of biological role, probable transcription factor that binds to the L1 box DNA sequence 5'-TAAATG[CT]A-3'. Plays a role in maintaining the identity of L1 cells, possibly by interacting with their L1 box or other target-gene promoters; binds to the LIP1 gene promoter and stimulates its expression upon imbibition. Acts as a positive regulator of gibberellins (GAs)-regulated epidermal gene expression (e.g. LIP1, LIP2, LTP1, FDH and PDF1). Functionally redundant to ATML1. Involved, together with HDG proteins (e.g. HDG1, HDG2, HDG5 and HDG12), in the regulation of flower organs development by promoting the expression of APETALA 3 (AP3) in the epidermis and internal cell layers of developing flowers. Seems to promote cell differentiation. This is Homeobox-leucine zipper protein PROTODERMAL FACTOR 2 from Arabidopsis thaliana (Mouse-ear cress).